A 180-amino-acid chain; its full sequence is UPF0398 protein EF_1150 (180 aa).

Belongs to the UPF0398 family.

In Enterococcus faecalis (strain ATCC 700802 / V583), this protein is UPF0398 protein EF_1150.